The sequence spans 60 residues: Small, acid-soluble spore protein 1 (60 aa).

Belongs to the alpha/beta-type SASP family. SASP are degraded in the first minutes of spore germination and provide amino acids for both new protein synthesis and metabolism.

Its function is as follows. SASP are bound to spore DNA. They are double-stranded DNA-binding proteins that cause DNA to change to an a-like conformation. They protect the DNA backbone from chemical and enzymatic cleavage and are thus involved in dormant spore's high resistance to UV light. This Clostridium perfringens (strain 13 / Type A) protein is Small, acid-soluble spore protein 1 (ssp1).